The primary structure comprises 92 residues: C-C motif chemokine 3 (92 aa).

A signal peptide spans Met1 to Ala23. Cystine bridges form between Cys33-Cys57 and Cys34-Cys73.

This sequence belongs to the intercrine beta (chemokine CC) family. Self-associates. Also heterodimer of MIP-1-alpha(4-69) and MIP-1-beta(3-69). Interacts with CCR1. In terms of processing, N-terminal processed form LD78-alpha(4-69) is produced by proteolytic cleavage after secretion from HTLV1-transformed T-cells.

It localises to the secreted. Its function is as follows. Monokine with inflammatory and chemokinetic properties. Binds to CCR1, CCR4 and CCR5. One of the major HIV-suppressive factors produced by CD8+ T-cells. Recombinant MIP-1-alpha induces a dose-dependent inhibition of different strains of HIV-1, HIV-2, and simian immunodeficiency virus (SIV). This is C-C motif chemokine 3 (CCL3) from Homo sapiens (Human).